A 539-amino-acid chain; its full sequence is Phosphoenolpyruvate carboxykinase (ATP) (539 aa).

Residues Arg64, Tyr206, and Lys212 each contribute to the substrate site. ATP is bound by residues Lys212, His231, and 247–255 (GLSGTGKTT). Mn(2+) is bound by residues Lys212 and His231. Residue Asp268 participates in Mn(2+) binding. ATP-binding positions include Glu296, Arg332, 448-449 (RI), and Thr454. Residue Arg332 participates in substrate binding.

The protein belongs to the phosphoenolpyruvate carboxykinase (ATP) family. Monomer. Mn(2+) is required as a cofactor.

The protein localises to the cytoplasm. The catalysed reaction is oxaloacetate + ATP = phosphoenolpyruvate + ADP + CO2. The protein operates within carbohydrate biosynthesis; gluconeogenesis. Functionally, involved in the gluconeogenesis. Catalyzes the conversion of oxaloacetate (OAA) to phosphoenolpyruvate (PEP) through direct phosphoryl transfer between the nucleoside triphosphate and OAA. This is Phosphoenolpyruvate carboxykinase (ATP) from Salmonella agona (strain SL483).